A 152-amino-acid chain; its full sequence is Urease accessory protein UreE (152 aa).

It belongs to the UreE family.

The protein resides in the cytoplasm. Its function is as follows. Involved in urease metallocenter assembly. Binds nickel. Probably functions as a nickel donor during metallocenter assembly. The chain is Urease accessory protein UreE from Psychromonas ingrahamii (strain DSM 17664 / CCUG 51855 / 37).